The sequence spans 719 residues: Polyribonucleotide nucleotidyltransferase (719 aa).

Asp490 and Asp496 together coordinate Mg(2+). The 63-residue stretch at 557–619 (PKIEIIIIPK…KSIDAALTRI (63 aa)) folds into the KH domain. Positions 629–699 (GEIYEGKIRS…KTGKFKLSHK (71 aa)) constitute an S1 motif domain.

Belongs to the polyribonucleotide nucleotidyltransferase family. Mg(2+) is required as a cofactor.

Its subcellular location is the cytoplasm. The enzyme catalyses RNA(n+1) + phosphate = RNA(n) + a ribonucleoside 5'-diphosphate. Functionally, involved in mRNA degradation. Catalyzes the phosphorolysis of single-stranded polyribonucleotides processively in the 3'- to 5'-direction. The polypeptide is Polyribonucleotide nucleotidyltransferase (Azobacteroides pseudotrichonymphae genomovar. CFP2).